The primary structure comprises 301 residues: GTPase Era (301 aa).

In terms of domain architecture, Era-type G spans 7–175 (YCGFIAIVGR…AAIVRKHLPE (169 aa)). The segment at 15–22 (GRPNVGKS) is G1. 15-22 (GRPNVGKS) contributes to the GTP binding site. Residues 41-45 (QTTRH) form a G2 region. Residues 62–65 (DTPG) are G3. GTP-binding positions include 62–66 (DTPGL) and 124–127 (NKVD). The interval 124–127 (NKVD) is G4. A G5 region spans residues 154 to 156 (ISA). The KH type-2 domain maps to 206–283 (LGAELPYSVT…HLELWVKVKS (78 aa)).

The protein belongs to the TRAFAC class TrmE-Era-EngA-EngB-Septin-like GTPase superfamily. Era GTPase family. In terms of assembly, monomer.

The protein resides in the cytoplasm. It localises to the cell inner membrane. Its function is as follows. An essential GTPase that binds both GDP and GTP, with rapid nucleotide exchange. Plays a role in 16S rRNA processing and 30S ribosomal subunit biogenesis and possibly also in cell cycle regulation and energy metabolism. This Escherichia coli O1:K1 / APEC protein is GTPase Era.